A 219-amino-acid polypeptide reads, in one-letter code: Cytidylate kinase (219 aa).

Gly21–Thr29 provides a ligand contact to ATP.

Belongs to the cytidylate kinase family. Type 1 subfamily.

It is found in the cytoplasm. The catalysed reaction is CMP + ATP = CDP + ADP. It catalyses the reaction dCMP + ATP = dCDP + ADP. The polypeptide is Cytidylate kinase (Rickettsia conorii (strain ATCC VR-613 / Malish 7)).